Consider the following 448-residue polypeptide: tRNA(Ile)-lysidine synthase (448 aa).

An ATP-binding site is contributed by 25-30; it reads SGGSDS.

It belongs to the tRNA(Ile)-lysidine synthase family.

The protein resides in the cytoplasm. The enzyme catalyses cytidine(34) in tRNA(Ile2) + L-lysine + ATP = lysidine(34) in tRNA(Ile2) + AMP + diphosphate + H(+). Its function is as follows. Ligates lysine onto the cytidine present at position 34 of the AUA codon-specific tRNA(Ile) that contains the anticodon CAU, in an ATP-dependent manner. Cytidine is converted to lysidine, thus changing the amino acid specificity of the tRNA from methionine to isoleucine. The polypeptide is tRNA(Ile)-lysidine synthase (Brucella melitensis biotype 2 (strain ATCC 23457)).